The following is a 202-amino-acid chain: Imidazoleglycerol-phosphate dehydratase (202 aa).

The protein belongs to the imidazoleglycerol-phosphate dehydratase family.

Its subcellular location is the cytoplasm. The catalysed reaction is D-erythro-1-(imidazol-4-yl)glycerol 3-phosphate = 3-(imidazol-4-yl)-2-oxopropyl phosphate + H2O. Its pathway is amino-acid biosynthesis; L-histidine biosynthesis; L-histidine from 5-phospho-alpha-D-ribose 1-diphosphate: step 6/9. This is Imidazoleglycerol-phosphate dehydratase from Rhizobium etli (strain CIAT 652).